We begin with the raw amino-acid sequence, 330 residues long: MIKISYSPYTLKPVQSLNAATAATAREGVLLKVEWNDGLYGFADLHPWPELGDLSLEEQLSDLRMGRMTTQIEQSIWLARRDALLRKEKKHVFDGGEKIKNNYLLSHFQDLKPGFLDGLKNEGYNTVKVKMGRDLQKEADMLTHIAASGMRMRLDFNALGSWQTFEKFMVNLPLTVRPLIEYVEDPFPFDFHAWGEARKLAKIALDNQYDKVPWGKIASAPFDVIVIKPAKTDVDKAVAQCQKWNLKLAVTSYMDHPVGVVHAVGVAMELKDKYGDMILESGCLTHRLYQMDSFAAELSTQGPYLLKNKGTGVGFDKLLEALTWYQLKVR.

Lys-130 serves as the catalytic Proton donor. Residues Asp-155, Glu-184, and Asp-206 each coordinate Mg(2+). Lys-228 (proton acceptor) is an active-site residue.

This sequence belongs to the mandelate racemase/muconate lactonizing enzyme family. MenC type 1 subfamily. As to quaternary structure, monomer. A divalent metal cation is required as a cofactor.

It carries out the reaction (1R,6R)-6-hydroxy-2-succinyl-cyclohexa-2,4-diene-1-carboxylate = 2-succinylbenzoate + H2O. It functions in the pathway quinol/quinone metabolism; 1,4-dihydroxy-2-naphthoate biosynthesis; 1,4-dihydroxy-2-naphthoate from chorismate: step 4/7. It participates in cofactor biosynthesis; phylloquinone biosynthesis. In terms of biological role, converts 2-succinyl-6-hydroxy-2,4-cyclohexadiene-1-carboxylate (SHCHC) to 2-succinylbenzoate (OSB). Does not show N-succinylamino acid racemase (NSAR) activity with N-succinyl-L-phenylglycine as substrate. The chain is o-succinylbenzoate synthase from Bdellovibrio bacteriovorus (strain ATCC 15356 / DSM 50701 / NCIMB 9529 / HD100).